The chain runs to 165 residues: Crossover junction endodeoxyribonuclease RuvC (165 aa).

Catalysis depends on residues Asp7, Glu67, and Asp140. Mg(2+) contacts are provided by Asp7, Glu67, and Asp140.

It belongs to the RuvC family. In terms of assembly, homodimer which binds Holliday junction (HJ) DNA. The HJ becomes 2-fold symmetrical on binding to RuvC with unstacked arms; it has a different conformation from HJ DNA in complex with RuvA. In the full resolvosome a probable DNA-RuvA(4)-RuvB(12)-RuvC(2) complex forms which resolves the HJ. Requires Mg(2+) as cofactor.

Its subcellular location is the cytoplasm. The catalysed reaction is Endonucleolytic cleavage at a junction such as a reciprocal single-stranded crossover between two homologous DNA duplexes (Holliday junction).. Functionally, the RuvA-RuvB-RuvC complex processes Holliday junction (HJ) DNA during genetic recombination and DNA repair. Endonuclease that resolves HJ intermediates. Cleaves cruciform DNA by making single-stranded nicks across the HJ at symmetrical positions within the homologous arms, yielding a 5'-phosphate and a 3'-hydroxyl group; requires a central core of homology in the junction. The consensus cleavage sequence is 5'-(A/T)TT(C/G)-3'. Cleavage occurs on the 3'-side of the TT dinucleotide at the point of strand exchange. HJ branch migration catalyzed by RuvA-RuvB allows RuvC to scan DNA until it finds its consensus sequence, where it cleaves and resolves the cruciform DNA. This is Crossover junction endodeoxyribonuclease RuvC from Caldanaerobacter subterraneus subsp. tengcongensis (strain DSM 15242 / JCM 11007 / NBRC 100824 / MB4) (Thermoanaerobacter tengcongensis).